We begin with the raw amino-acid sequence, 371 residues long: Bifunctional enzyme IspD/IspF (371 aa).

A 2-C-methyl-D-erythritol 4-phosphate cytidylyltransferase region spans residues Met1–Ile210. The segment at Phe211 to Leu371 is 2-C-methyl-D-erythritol 2,4-cyclodiphosphate synthase. A divalent metal cation-binding residues include Asp217 and His219. 4-CDP-2-C-methyl-D-erythritol 2-phosphate is bound by residues Asp217–His219 and His243–Ser244. His251 lines the a divalent metal cation pocket. Residues Asp265–Gly267, Tyr270–Asp274, Thr341–Glu344, Phe348, and Arg351 contribute to the 4-CDP-2-C-methyl-D-erythritol 2-phosphate site.

In the N-terminal section; belongs to the IspD/TarI cytidylyltransferase family. IspD subfamily. The protein in the C-terminal section; belongs to the IspF family. A divalent metal cation serves as cofactor.

The catalysed reaction is 2-C-methyl-D-erythritol 4-phosphate + CTP + H(+) = 4-CDP-2-C-methyl-D-erythritol + diphosphate. The enzyme catalyses 4-CDP-2-C-methyl-D-erythritol 2-phosphate = 2-C-methyl-D-erythritol 2,4-cyclic diphosphate + CMP. It functions in the pathway isoprenoid biosynthesis; isopentenyl diphosphate biosynthesis via DXP pathway; isopentenyl diphosphate from 1-deoxy-D-xylulose 5-phosphate: step 2/6. It participates in isoprenoid biosynthesis; isopentenyl diphosphate biosynthesis via DXP pathway; isopentenyl diphosphate from 1-deoxy-D-xylulose 5-phosphate: step 4/6. Its function is as follows. Bifunctional enzyme that catalyzes the formation of 4-diphosphocytidyl-2-C-methyl-D-erythritol from CTP and 2-C-methyl-D-erythritol 4-phosphate (MEP) (IspD), and catalyzes the conversion of 4-diphosphocytidyl-2-C-methyl-D-erythritol 2-phosphate (CDP-ME2P) to 2-C-methyl-D-erythritol 2,4-cyclodiphosphate (ME-CPP) with a corresponding release of cytidine 5-monophosphate (CMP) (IspF). The chain is Bifunctional enzyme IspD/IspF from Campylobacter jejuni (strain RM1221).